A 555-amino-acid polypeptide reads, in one-letter code: Glutamate--tRNA ligase (555 aa).

A 'HIGH' region motif is present at residues 100–110 (PNPSGPLHIGH).

Belongs to the class-I aminoacyl-tRNA synthetase family. Glutamate--tRNA ligase type 2 subfamily.

Its subcellular location is the cytoplasm. It carries out the reaction tRNA(Glu) + L-glutamate + ATP = L-glutamyl-tRNA(Glu) + AMP + diphosphate. In terms of biological role, catalyzes the attachment of glutamate to tRNA(Glu) in a two-step reaction: glutamate is first activated by ATP to form Glu-AMP and then transferred to the acceptor end of tRNA(Glu). The protein is Glutamate--tRNA ligase of Methanococcus maripaludis (strain DSM 14266 / JCM 13030 / NBRC 101832 / S2 / LL).